A 129-amino-acid polypeptide reads, in one-letter code: NHP2-like protein 1 homolog (129 aa).

It belongs to the eukaryotic ribosomal protein eL8 family.

Its subcellular location is the nucleus. The protein localises to the nucleolus. Binds to the 5'-stem-loop of U4 snRNA and may play a role in the late stage of spliceosome assembly. The protein undergoes a conformational change upon RNA-binding. The polypeptide is NHP2-like protein 1 homolog (Dictyostelium discoideum (Social amoeba)).